The primary structure comprises 746 residues: Lysine-specific histone demethylase 1 homolog 2 (746 aa).

The disordered stretch occupies residues 1-26 (MNSPASDETAPRRNRRKVSRKNYDEN). The region spanning 51 to 152 (EKETETEALI…FGVSPLFAPY (102 aa)) is the SWIRM domain. FAD contacts are provided by E189, R191, R197, and E569.

It belongs to the flavin monoamine oxidase family. It depends on FAD as a cofactor. Expressed in the shoot and root apical regions of young seedlings. Expressed in inflorescences.

In terms of biological role, probable histone demethylase that reduces the levels of histone H3 'Lys-4' methylation in chromatin of the floral repressor FLOWERING LOCUS C (FLC) and the sporophytically silenced floral repressor FWA. Seems to act in partial redundancy with FLOWERING LOCUS D (FLD) to repress FLC expression. Required for cytosine methylation of FWA. Controls primary seed dormancy by regulating DOG1 and abscisic acid signaling-related genes. The sequence is that of Lysine-specific histone demethylase 1 homolog 2 from Arabidopsis thaliana (Mouse-ear cress).